An 852-amino-acid polypeptide reads, in one-letter code: Leucine--tRNA ligase (852 aa).

The 'HIGH' region signature appears at proline 42–histidine 52. The tract at residues asparagine 586–glutamate 606 is disordered. The short motif at lysine 614–serine 618 is the 'KMSKS' region element. Position 617 (lysine 617) interacts with ATP.

This sequence belongs to the class-I aminoacyl-tRNA synthetase family.

It localises to the cytoplasm. The enzyme catalyses tRNA(Leu) + L-leucine + ATP = L-leucyl-tRNA(Leu) + AMP + diphosphate. This chain is Leucine--tRNA ligase, found in Picosynechococcus sp. (strain ATCC 27264 / PCC 7002 / PR-6) (Agmenellum quadruplicatum).